The chain runs to 508 residues: Photosystem II CP47 reaction center protein (508 aa).

The next 6 helical transmembrane spans lie at 21 to 36, 101 to 115, 140 to 156, 203 to 218, 237 to 252, and 457 to 472; these read AVHI…WAGS, IVFS…TWHW, GIHL…FGAF, VAAG…FHLS, VLSS…AFIV, and TFAL…HGAR.

It belongs to the PsbB/PsbC family. PsbB subfamily. As to quaternary structure, PSII is composed of 1 copy each of membrane proteins PsbA, PsbB, PsbC, PsbD, PsbE, PsbF, PsbH, PsbI, PsbJ, PsbK, PsbL, PsbM, PsbT, PsbX, PsbY, PsbZ, Psb30/Ycf12, at least 3 peripheral proteins of the oxygen-evolving complex and a large number of cofactors. It forms dimeric complexes. The cofactor is Binds multiple chlorophylls. PSII binds additional chlorophylls, carotenoids and specific lipids..

It localises to the plastid. The protein resides in the chloroplast thylakoid membrane. One of the components of the core complex of photosystem II (PSII). It binds chlorophyll and helps catalyze the primary light-induced photochemical processes of PSII. PSII is a light-driven water:plastoquinone oxidoreductase, using light energy to abstract electrons from H(2)O, generating O(2) and a proton gradient subsequently used for ATP formation. The sequence is that of Photosystem II CP47 reaction center protein from Welwitschia mirabilis (Tree tumbo).